We begin with the raw amino-acid sequence, 132 residues long: Putative esterase Ta0293 (132 aa).

It belongs to the thioesterase PaaI family.

The polypeptide is Putative esterase Ta0293 (Thermoplasma acidophilum (strain ATCC 25905 / DSM 1728 / JCM 9062 / NBRC 15155 / AMRC-C165)).